The following is a 167-amino-acid chain: Cytochrome b6-f complex subunit 4 (167 aa).

Helical transmembrane passes span leucine 36–valine 56, leucine 95–glutamate 115, and threonine 131–isoleucine 151.

This sequence belongs to the cytochrome b family. PetD subfamily. In terms of assembly, the 4 large subunits of the cytochrome b6-f complex are cytochrome b6, subunit IV (17 kDa polypeptide, petD), cytochrome f and the Rieske protein, while the 4 small subunits are petG, petL, petM and petN. The complex functions as a dimer.

It localises to the plastid. The protein localises to the chloroplast thylakoid membrane. Functionally, component of the cytochrome b6-f complex, which mediates electron transfer between photosystem II (PSII) and photosystem I (PSI), cyclic electron flow around PSI, and state transitions. The sequence is that of Cytochrome b6-f complex subunit 4 from Calycanthus floridus var. glaucus (Eastern sweetshrub).